Here is a 540-residue protein sequence, read N- to C-terminus: MATPGAASAELVIGWCIFGLLLLAILAFCWIYVRKYQSRRESEVVSTITAIFSLAIALITSALLPVDIFLVSYMKNQNGTFKDWANANVSRQIEDTVLYGYYTLYSVILFCVFFWIPFVYFYYEEKDDDDTSKCTQIKTALKYTLGFVVICALLLLVGAFVPLNVPNNKNSTEWEKVKFLFEELGSSHGLAALSFSISSLTLIGMLAAITYTAYGMSALPLNLIKGTRSAAYERLENTEDIEEVEQHIQTIKSKSKDGRPLPARDKRALKQFEERLRTLKKRERHLEFIENSWWTKFCGALRPLKIIWGIFFILVALLFVISLFLSNLDKALHSAGIDSGFIIFGANLSNPLNMLLPLLQTVFPLDYILITIIIMYFIFTSMAGIRNIGIWFFWIRLYKIRRGRTRPQALLFLCMILLLIVLHTSYMIYSLAPQYVMYGSQNYLIETNITSDNHKGNSTLSVPKRCDADAPEDQCTVTRTYLFLHKFWFFSAAYYFGNWAFLGVFLIGLIVSCCKGKKSVIEGVDEDSDISDDEPSVYSV.

Over 1–10 the chain is Extracellular; the sequence is MATPGAASAE. The helical transmembrane segment at 11-31 threads the bilayer; it reads LVIGWCIFGLLLLAILAFCWI. Topologically, residues 32-50 are cytoplasmic; sequence YVRKYQSRRESEVVSTITA. A helical membrane pass occupies residues 51 to 71; it reads IFSLAIALITSALLPVDIFLV. Residues 72–100 lie on the Extracellular side of the membrane; that stretch reads SYMKNQNGTFKDWANANVSRQIEDTVLYG. N78 and N88 each carry an N-linked (GlcNAc...) asparagine glycan. The helical transmembrane segment at 101-121 threads the bilayer; it reads YYTLYSVILFCVFFWIPFVYF. At 122–144 the chain is on the cytoplasmic side; the sequence is YYEEKDDDDTSKCTQIKTALKYT. The helical transmembrane segment at 145–165 threads the bilayer; the sequence is LGFVVICALLLLVGAFVPLNV. Residues 166–188 lie on the Extracellular side of the membrane; the sequence is PNNKNSTEWEKVKFLFEELGSSH. Residue N170 is glycosylated (N-linked (GlcNAc...) asparagine). A helical transmembrane segment spans residues 189–209; that stretch reads GLAALSFSISSLTLIGMLAAI. Residues 210–305 lie on the Cytoplasmic side of the membrane; it reads TYTAYGMSAL…KFCGALRPLK (96 aa). Positions 232–235 match the YERL motif; mediates interaction with adapter protein complex 2 and is essential for its function in clathrin-mediated endocytosis of INSR motif; the sequence is YERL. Phosphothreonine is present on T238. The WTKF motif; mediates interaction with adapter protein complex 2 and is essential for its function in clathrin-mediated endocytosis of INSR signature appears at 294–297; the sequence is WTKF. A helical transmembrane segment spans residues 306–326; sequence IIWGIFFILVALLFVISLFLS. Residues 327 to 364 are Extracellular-facing; it reads NLDKALHSAGIDSGFIIFGANLSNPLNMLLPLLQTVFP. Residue N347 is glycosylated (N-linked (GlcNAc...) asparagine). The chain crosses the membrane as a helical span at residues 365–385; sequence LDYILITIIIMYFIFTSMAGI. Topologically, residues 386-408 are cytoplasmic; that stretch reads RNIGIWFFWIRLYKIRRGRTRPQ. A helical membrane pass occupies residues 409 to 429; that stretch reads ALLFLCMILLLIVLHTSYMIY. The Extracellular portion of the chain corresponds to 430–486; it reads SLAPQYVMYGSQNYLIETNITSDNHKGNSTLSVPKRCDADAPEDQCTVTRTYLFLHK. N-linked (GlcNAc...) asparagine glycosylation is found at N448 and N457. The chain crosses the membrane as a helical span at residues 487–507; the sequence is FWFFSAAYYFGNWAFLGVFLI. Topologically, residues 508 to 540 are cytoplasmic; that stretch reads GLIVSCCKGKKSVIEGVDEDSDISDDEPSVYSV. A phosphoserine mark is found at S528 and S531.

It belongs to the LIMR family. LMBRD1 subfamily. In terms of assembly, interacts with ABCD4; this interaction induces the translocation of ABCD4 from the endoplasmic reticulum to the lysosome. Interacts with ABCD4 and MMACHC; this interaction ensures the transport of cobalamin from the lysosome to the cytoplasm. Interacts with INSR, adapter protein complex 2 and clathrin heavy chain. N-glycosylated.

It localises to the lysosome membrane. The protein resides in the cell membrane. It is found in the cytoplasmic vesicle. The protein localises to the clathrin-coated vesicle. Lysosomal membrane chaperone required to export cobalamin (vitamin B12) from lysosome to the cytosol, allowing its conversion to cofactors. Targets ABCD4 transporter from the endoplasmic reticulum to the lysosomal membrane. Then forms a complex with lysosomal transporter ABCD4 and cytoplasmic MMACHC to transport cobalamin across the lysosomal membrane. Acts as an adapter protein which plays an important role in mediating and regulating the internalization of the insulin receptor (INSR). Involved in clathrin-mediated endocytosis of INSR via its interaction with adapter protein complex 2. Essential for the initiation of gastrulation and early formation of mesoderm structures during embryogenesis. This is Lysosomal cobalamin transport escort protein LMBD1 (LMBRD1) from Macaca fascicularis (Crab-eating macaque).